The following is a 125-amino-acid chain: Small ribosomal subunit protein uS12 (125 aa).

Residue Asp89 is modified to 3-methylthioaspartic acid. Positions 106–125 (GVKDRKQSRSKYGAKRPKKA) are disordered. A compositionally biased stretch (basic residues) spans 113–125 (SRSKYGAKRPKKA).

The protein belongs to the universal ribosomal protein uS12 family. As to quaternary structure, part of the 30S ribosomal subunit. Contacts proteins S8 and S17. May interact with IF1 in the 30S initiation complex.

Functionally, with S4 and S5 plays an important role in translational accuracy. Its function is as follows. Interacts with and stabilizes bases of the 16S rRNA that are involved in tRNA selection in the A site and with the mRNA backbone. Located at the interface of the 30S and 50S subunits, it traverses the body of the 30S subunit contacting proteins on the other side and probably holding the rRNA structure together. The combined cluster of proteins S8, S12 and S17 appears to hold together the shoulder and platform of the 30S subunit. The chain is Small ribosomal subunit protein uS12 from Aromatoleum aromaticum (strain DSM 19018 / LMG 30748 / EbN1) (Azoarcus sp. (strain EbN1)).